The sequence spans 1522 residues: Histone-lysine N-methyltransferase EZH2 (1522 aa).

The tract at residues 1–196 is disordered; that stretch reads MSPARGDANA…PKTPTPKNTE (196 aa). Positions 39–61 are enriched in basic and acidic residues; sequence NRENLRDRDRADKLEKLEKDAHA. Composition is skewed to low complexity over residues 64–76 and 103–130; these read QTQT…PVTV and RGST…SPSL. The segment covering 141–162 has biased composition (polar residues); the sequence is ILASRTSRFSNRTGIRDSQSPS. The span at 180–195 shows a compositional bias: low complexity; it reads ATSNTPAPKTPTPKNT. The tract at residues 190-220 is SBD domain; it reads PTPKNTEWTVDKIASALSVLAEEVPQNHSRL. The segment at 221–250 is EBD domain; sequence VNFLLEETEKRAPQPRHLSKTDPFAHMKSK. A BAM domain region spans residues 251-300; that stretch reads AIDANRPRPEGVPTMDVKFKQHSGEYGKSRNSGRRFQYPVVCIKPDREPV. Residues 301–320 form an SAL domain region; that stretch reads PPYRFHHAEIRKNILALNSQ. Residues 321 to 360 are SRM domain; it reads LNFVPHLRDVDPNSAEEQKYSAWLMDLENLDSKSGFKIQP. The interval 361–480 is SANT1L domain; that stretch reads RSQKIAKRAQ…PIFDNKRAKD (120 aa). A disordered region spans residues 406–426; that stretch reads PESDDSMTPQQKSNLLDTYSD. Polar residues predominate over residues 411–422; the sequence is SMTPQQKSNLLD. The tract at residues 481–560 is MCSS domain; it reads APGSQKPPDE…EQRQKTEGGS (80 aa). The Zn(2+) site is built by C508, C511, C516, H518, C570, C574, C615, C625, C685, H687, C691, C697, C699, C709, C713, C715, C720, C727, C729, C736, C746, C748, C755, C760, C763, and C784. The SANT2L domain stretch occupies residues 561 to 650; the sequence is ANAPPAHPPC…PVEPRTIPKQ (90 aa). A CXC domain is found at 658–780; the sequence is RRKKQLMSDW…PENAYDEVLH (123 aa). Residues 795–919 form the SET domain; the sequence is KAVVLGKSQL…AGEELFFNYG (125 aa). Y809, K852, S854, and Y855 together coordinate S-adenosyl-L-homocysteine. S-adenosyl-L-methionine contacts are provided by Y809, K852, S854, Y855, N880, H881, and T926. H881 contacts S-adenosyl-L-homocysteine. K927 contributes to the S-adenosyl-L-homocysteine binding site. The tract at residues 933–1522 is disordered; that stretch reads NEQSGAETTP…KPARYRDEGE (590 aa). A compositionally biased stretch (polar residues) spans 935–946; that stretch reads QSGAETTPQQPK. Positions 971–988 are enriched in acidic residues; sequence GFDDDDRDGNDSDPDDLW. The span at 992 to 1024 shows a compositional bias: low complexity; that stretch reads QQQQQQQQQQQQQQQQQQQQQQQQQQQQQQQQQ. Polar residues predominate over residues 1025 to 1038; the sequence is AQKPQPSTSHQPQS. Residues 1053–1066 show a composition bias toward basic and acidic residues; the sequence is SPDKQLRRENHDAQ. Positions 1072-1091 are enriched in low complexity; sequence QFQQQEQQQQQQQQQQQQQQ. Residues 1127-1136 are compositionally biased toward polar residues; it reads DSSSGGSANE. Over residues 1142–1162 the composition is skewed to basic residues; the sequence is KPSRRGGARPGAGRKPKHRPP. Composition is skewed to basic and acidic residues over residues 1207-1221 and 1228-1238; these read SDSK…TDKE and VNEKDREKGRD. Low complexity predominate over residues 1255-1299; it reads KSAPSPAKKQASSPTKISDSNRTTSKNTSSNNNNNTNNNNNNNNN. The span at 1316–1330 shows a compositional bias: polar residues; sequence HLTNSQPAALSPSAT. 2 stretches are compositionally biased toward low complexity: residues 1355-1385 and 1415-1428; these read STMT…SSSS and SSSL…SVFS. Polar residues predominate over residues 1455-1464; it reads SGLNSTSLSQ. The span at 1465-1494 shows a compositional bias: basic and acidic residues; it reads ERGEKHEKHEKEKPKEKKGEKERERERDRS.

This sequence belongs to the class V-like SAM-binding methyltransferase superfamily. Histone-lysine methyltransferase family. EZ subfamily. Component of the polycomb repressive complex 2 (PRC2) that consists of four core subunits icluding EZH2, EED, SUZ12, and RBBP4, among which EZH2 is the catalytic subunit and which minimally requires EED and SUZ12 for catalysis.

Its subcellular location is the nucleus. The catalysed reaction is L-lysyl(27)-[histone H3] + 3 S-adenosyl-L-methionine = N(6),N(6),N(6)-trimethyl-L-lysyl(27)-[histone H3] + 3 S-adenosyl-L-homocysteine + 3 H(+). The end product of PRC2 catalysis, H3K27me3, interacts with EED to stimulate the enzymatic activity of PRC2 allosterically. The enzymatic activity of PRC2 is regulated in a very complex manner and PCR2 can adopt different stages including the autoinhibited (A); SAM-bound autoinhibited (A'), basal (B), and H3K27me3-stimulated (S) stages. Actictivity is inhibited by pyridone inhibitors such as GSK126. Its function is as follows. Catalytic subunit of the of the Polycomb Repressive Complex 2 (PRC2), a histone H3 lysine methyltransferase responsible for generating mono-, di-, and tri-methylation on Lys27 (H3K27me1, H3K27me2 and H3K27me3). The tri-methylated form is known to be critical in gene repression, and its proper placement is essential in defining repression patterns during development. The PRC2 complex interacts with thousands of RNA species in vivo, but the physiological function of RNA binding has still to be determined. This is Histone-lysine N-methyltransferase EZH2 from Chaetomium thermophilum (strain DSM 1495 / CBS 144.50 / IMI 039719) (Thermochaetoides thermophila).